A 95-amino-acid chain; its full sequence is Integration host factor subunit beta (95 aa).

The protein belongs to the bacterial histone-like protein family. As to quaternary structure, heterodimer of an alpha and a beta chain.

Functionally, this protein is one of the two subunits of integration host factor, a specific DNA-binding protein that functions in genetic recombination as well as in transcriptional and translational control. This is Integration host factor subunit beta from Ruegeria sp. (strain TM1040) (Silicibacter sp.).